A 405-amino-acid chain; its full sequence is Cytochrome b (405 aa).

Residues 44-64 (FGSLAGIAMIIMIATGIFLAM) form a helical membrane-spanning segment. Heme b is bound by residues H94 and H108. The next 8 membrane-spanning stretches (helical) occupy residues 97 to 117 (GASMFFIVVYVHMFRGLYYGS), 124 to 144 (VLWWLGLVILLLMMATAFMGY), 163 to 183 (FSAIPVVGDDIVTLLWGGFSV), 191 to 211 (FFSLHYLFPMLLFAVVFLHMW), 245 to 265 (FGLGIFLMVFCFFVFFAPNFF), 303 to 323 (LGGVLAMFGAILILFVLPWLD), 338 to 358 (GFFWVFLADCLLLGYLGAMPA), and 368 to 388 (LATIYYFLHFLVITPLVGWFE). Residues H195 and H209 each coordinate heme b.

This sequence belongs to the cytochrome b family. As to quaternary structure, the main subunits of complex b-c1 are: cytochrome b, cytochrome c1 and the Rieske protein. The cofactor is heme b.

It localises to the cell membrane. Its function is as follows. Component of the ubiquinol-cytochrome c reductase complex (complex III or cytochrome b-c1 complex), which is a respiratory chain that generates an electrochemical potential coupled to ATP synthesis. The polypeptide is Cytochrome b (petB) (Rhodospirillum rubrum).